We begin with the raw amino-acid sequence, 243 residues long: Adenylate kinase 4 (243 aa).

G40–T45 serves as a coordination point for ATP. The tract at residues A60 to V89 is NMP. AMP is bound by residues T61, R66, E87–V89, G115–R118, and Q122. The LID stretch occupies residues G156 to D193. R157 contacts ATP. AMP-binding residues include R190 and R201.

This sequence belongs to the adenylate kinase family.

The protein resides in the cytoplasm. The catalysed reaction is AMP + ATP = 2 ADP. In terms of biological role, catalyzes the reversible transfer of the terminal phosphate group between ATP and AMP. Plays an important role in cellular energy homeostasis and in adenine nucleotide metabolism. The polypeptide is Adenylate kinase 4 (ADK-B) (Oryza sativa subsp. japonica (Rice)).